We begin with the raw amino-acid sequence, 353 residues long: 4-hydroxy-3-methylbut-2-en-1-yl diphosphate synthase (flavodoxin) (353 aa).

[4Fe-4S] cluster is bound by residues Cys268, Cys271, Cys303, and Glu310.

It belongs to the IspG family. [4Fe-4S] cluster serves as cofactor.

The enzyme catalyses (2E)-4-hydroxy-3-methylbut-2-enyl diphosphate + oxidized [flavodoxin] + H2O + 2 H(+) = 2-C-methyl-D-erythritol 2,4-cyclic diphosphate + reduced [flavodoxin]. It participates in isoprenoid biosynthesis; isopentenyl diphosphate biosynthesis via DXP pathway; isopentenyl diphosphate from 1-deoxy-D-xylulose 5-phosphate: step 5/6. Converts 2C-methyl-D-erythritol 2,4-cyclodiphosphate (ME-2,4cPP) into 1-hydroxy-2-methyl-2-(E)-butenyl 4-diphosphate. This is 4-hydroxy-3-methylbut-2-en-1-yl diphosphate synthase (flavodoxin) from Ruminiclostridium cellulolyticum (strain ATCC 35319 / DSM 5812 / JCM 6584 / H10) (Clostridium cellulolyticum).